Consider the following 236-residue polypeptide: Small ribosomal subunit protein uS3 (236 aa).

The KH type-2 domain maps to 38–106 (LRRYLHTRLK…DIQINISEIK (69 aa)). The interval 211–236 (DLSPNVQAQQRKMKESPQQRRQRRGG) is disordered.

This sequence belongs to the universal ribosomal protein uS3 family. In terms of assembly, part of the 30S ribosomal subunit. Forms a tight complex with proteins S10 and S14.

Functionally, binds the lower part of the 30S subunit head. Binds mRNA in the 70S ribosome, positioning it for translation. The protein is Small ribosomal subunit protein uS3 of Salinibacter ruber (strain DSM 13855 / M31).